Consider the following 467-residue polypeptide: Asparagine--tRNA ligase (467 aa).

This sequence belongs to the class-II aminoacyl-tRNA synthetase family. As to quaternary structure, homodimer.

It localises to the cytoplasm. The catalysed reaction is tRNA(Asn) + L-asparagine + ATP = L-asparaginyl-tRNA(Asn) + AMP + diphosphate + H(+). In Baumannia cicadellinicola subsp. Homalodisca coagulata, this protein is Asparagine--tRNA ligase.